The sequence spans 274 residues: Bis(5'-nucleosyl)-tetraphosphatase, symmetrical (274 aa).

This sequence belongs to the Ap4A hydrolase family.

It catalyses the reaction P(1),P(4)-bis(5'-adenosyl) tetraphosphate + H2O = 2 ADP + 2 H(+). Its function is as follows. Hydrolyzes diadenosine 5',5'''-P1,P4-tetraphosphate to yield ADP. This is Bis(5'-nucleosyl)-tetraphosphatase, symmetrical from Shewanella baltica (strain OS155 / ATCC BAA-1091).